We begin with the raw amino-acid sequence, 248 residues long: 3-deoxy-manno-octulosonate cytidylyltransferase (248 aa).

Belongs to the KdsB family.

Its subcellular location is the cytoplasm. The enzyme catalyses 3-deoxy-alpha-D-manno-oct-2-ulosonate + CTP = CMP-3-deoxy-beta-D-manno-octulosonate + diphosphate. It participates in nucleotide-sugar biosynthesis; CMP-3-deoxy-D-manno-octulosonate biosynthesis; CMP-3-deoxy-D-manno-octulosonate from 3-deoxy-D-manno-octulosonate and CTP: step 1/1. Its pathway is bacterial outer membrane biogenesis; lipopolysaccharide biosynthesis. Its function is as follows. Activates KDO (a required 8-carbon sugar) for incorporation into bacterial lipopolysaccharide in Gram-negative bacteria. The chain is 3-deoxy-manno-octulosonate cytidylyltransferase from Salmonella agona (strain SL483).